Reading from the N-terminus, the 160-residue chain is D-aminoacyl-tRNA deacylase 2 (160 aa).

The Gly-transPro motif, allows the protein to recognize chirality of D-amino acids motif lies at 152 to 153; that stretch reads GP.

The protein belongs to the DTD family. As to quaternary structure, homodimer.

The protein resides in the cytoplasm. The catalysed reaction is a D-aminoacyl-tRNA + H2O = a tRNA + a D-alpha-amino acid + H(+). It catalyses the reaction glycyl-tRNA(Ala) + H2O = tRNA(Ala) + glycine + H(+). The enzyme catalyses D-tyrosyl-tRNA(Tyr) + H2O = D-tyrosine + tRNA(Tyr). It carries out the reaction L-alanyl-tRNA(Thr) + H2O = tRNA(Thr) + L-alanine + H(+). In terms of biological role, deacylates mischarged D-aminoacyl-tRNAs. Also deacylates mischarged glycyl-tRNA(Ala), protecting cells against glycine mischarging by AlaRS. Probably acts by rejecting L-amino acids from its binding site rather than specific recognition of D-amino acids. Catalyzes the hydrolysis of D-tyrosyl-tRNA(Tyr), has no activity on correctly charged L-tyrosyl-tRNA(Tyr). By recycling D-aminoacyl-tRNA to D-amino acids and free tRNA molecules, this enzyme counteracts the toxicity associated with the formation of D-aminoacyl-tRNA entities in vivo and helps enforce protein L-homochirality. In contrast to DTD1, deacylates L-Ala mischarged on tRNA(Thr)(G4.U69) by alanine-tRNA ligase AARS. Can deacylate L-Ala due to a relaxed specificity for substrate chirality caused by the trans conformation of the Gly-Pro motif in the active site. Also hydrolyzes correctly charged, achiral, glycyl-tRNA(Gly) in vitro, although in vivo eef1a1a/EF-Tu may protect cognate achiral glycyl-tRNA(Gly) from DTD2-mediated deacetylation. This Danio rerio (Zebrafish) protein is D-aminoacyl-tRNA deacylase 2 (dtd2).